A 39-amino-acid chain; its full sequence is Photosystem II reaction center protein L (39 aa).

A helical membrane pass occupies residues 18 to 38; that stretch reads ILYWGLLLIFVLAVLFSNYFF.

The protein belongs to the PsbL family. In terms of assembly, PSII is composed of 1 copy each of membrane proteins PsbA, PsbB, PsbC, PsbD, PsbE, PsbF, PsbH, PsbI, PsbJ, PsbK, PsbL, PsbM, PsbT, PsbX, PsbY, PsbZ, Psb30/Ycf12, at least 3 peripheral proteins of the oxygen-evolving complex and a large number of cofactors. It forms dimeric complexes.

Its subcellular location is the plastid membrane. In terms of biological role, one of the components of the core complex of photosystem II (PSII). PSII is a light-driven water:plastoquinone oxidoreductase that uses light energy to abstract electrons from H(2)O, generating O(2) and a proton gradient subsequently used for ATP formation. It consists of a core antenna complex that captures photons, and an electron transfer chain that converts photonic excitation into a charge separation. This subunit is found at the monomer-monomer interface and is required for correct PSII assembly and/or dimerization. This Cuscuta pentagona (Five-angled dodder) protein is Photosystem II reaction center protein L.